Consider the following 163-residue polypeptide: NADH-quinone oxidoreductase subunit B (163 aa).

C32, C33, C98, and C127 together coordinate [4Fe-4S] cluster.

Belongs to the complex I 20 kDa subunit family. In terms of assembly, NDH-1 is composed of 14 different subunits. Subunits NuoB, C, D, E, F, and G constitute the peripheral sector of the complex. It depends on [4Fe-4S] cluster as a cofactor.

It is found in the cell inner membrane. The catalysed reaction is a quinone + NADH + 5 H(+)(in) = a quinol + NAD(+) + 4 H(+)(out). Its function is as follows. NDH-1 shuttles electrons from NADH, via FMN and iron-sulfur (Fe-S) centers, to quinones in the respiratory chain. Couples the redox reaction to proton translocation (for every two electrons transferred, four hydrogen ions are translocated across the cytoplasmic membrane), and thus conserves the redox energy in a proton gradient. This chain is NADH-quinone oxidoreductase subunit B, found in Pelobacter propionicus (strain DSM 2379 / NBRC 103807 / OttBd1).